We begin with the raw amino-acid sequence, 480 residues long: MNQDFWPFCLARLEQELPQQQFNTWIKTLQAAESDADGAVALTLTAPNRFVLQWVRERYMRRIGELGEEFHGQPIQLELQLPVAGAKSAPVAPARVRPAGANGGAAANSPMAPPVSEAAPPQIIVRPSEPEPVSANELAYDKTRLNADFTFDTLVTGRANDLARAAAMQVAQNPGTSYNPLFVYGGVGLGKTHLVHAIGNAVYRHNPRMVIRYVHVEDYYADVVRAYQQKSFDAFKRYYRSLDMLIIDDIQFFNNKNRTQEEFFHAFNALTEAKKQIVITCDTYPKDIQGLEDRLISRFDWGLTVQIEPPELEMRVAILQKKAEALRVSVDDDVAFLIAKNLRSNVRELEGALNKVVAYARFHGRGISLEVAKEALKDLLHAHNRQLSIEHIQKTVADYYKIKVADMHSKKRTRVIARPRQVAMWLAKELTPMSLPAIGEAFGGRDHTTVLHACRTITELRLGDHQLNHDVHVLTQVLRG.

The domain I, interacts with DnaA modulators stretch occupies residues 1–73 (MNQDFWPFCL…GELGEEFHGQ (73 aa)). The segment at 73 to 143 (QPIQLELQLP…SANELAYDKT (71 aa)) is domain II. The interval 144 to 360 (RLNADFTFDT…GALNKVVAYA (217 aa)) is domain III, AAA+ region. Gly188, Gly190, Lys191, and Thr192 together coordinate ATP. The tract at residues 361-480 (RFHGRGISLE…VHVLTQVLRG (120 aa)) is domain IV, binds dsDNA.

Belongs to the DnaA family. Oligomerizes as a right-handed, spiral filament on DNA at oriC.

It is found in the cytoplasm. Plays an essential role in the initiation and regulation of chromosomal replication. ATP-DnaA binds to the origin of replication (oriC) to initiate formation of the DNA replication initiation complex once per cell cycle. Binds the DnaA box (a 9 base pair repeat at the origin) and separates the double-stranded (ds)DNA. Forms a right-handed helical filament on oriC DNA; dsDNA binds to the exterior of the filament while single-stranded (ss)DNA is stabiized in the filament's interior. The ATP-DnaA-oriC complex binds and stabilizes one strand of the AT-rich DNA unwinding element (DUE), permitting loading of DNA polymerase. After initiation quickly degrades to an ADP-DnaA complex that is not apt for DNA replication. Binds acidic phospholipids. This Azoarcus sp. (strain BH72) protein is Chromosomal replication initiator protein DnaA.